We begin with the raw amino-acid sequence, 384 residues long: Dual-specificity RNA methyltransferase RlmN (384 aa).

Catalysis depends on E105, which acts as the Proton acceptor. Residues 111 to 350 (EDDRATLCVS…TIVRKTRGDD (240 aa)) enclose the Radical SAM core domain. C118 and C355 form a disulfide bridge. C125, C129, and C132 together coordinate [4Fe-4S] cluster. S-adenosyl-L-methionine-binding positions include 179–180 (GE), S211, 233–235 (SLH), and N312. Residue C355 is the S-methylcysteine intermediate of the active site.

It belongs to the radical SAM superfamily. RlmN family. [4Fe-4S] cluster is required as a cofactor.

Its subcellular location is the cytoplasm. It carries out the reaction adenosine(2503) in 23S rRNA + 2 reduced [2Fe-2S]-[ferredoxin] + 2 S-adenosyl-L-methionine = 2-methyladenosine(2503) in 23S rRNA + 5'-deoxyadenosine + L-methionine + 2 oxidized [2Fe-2S]-[ferredoxin] + S-adenosyl-L-homocysteine. The enzyme catalyses adenosine(37) in tRNA + 2 reduced [2Fe-2S]-[ferredoxin] + 2 S-adenosyl-L-methionine = 2-methyladenosine(37) in tRNA + 5'-deoxyadenosine + L-methionine + 2 oxidized [2Fe-2S]-[ferredoxin] + S-adenosyl-L-homocysteine. Its function is as follows. Specifically methylates position 2 of adenine 2503 in 23S rRNA and position 2 of adenine 37 in tRNAs. m2A2503 modification seems to play a crucial role in the proofreading step occurring at the peptidyl transferase center and thus would serve to optimize ribosomal fidelity. In Escherichia coli O157:H7, this protein is Dual-specificity RNA methyltransferase RlmN.